A 362-amino-acid polypeptide reads, in one-letter code: sn-glycerol-3-phosphate import ATP-binding protein UgpC (362 aa).

An ABC transporter domain is found at L4–I235. G37–S44 is a binding site for ATP.

Belongs to the ABC transporter superfamily. sn-glycerol-3-phosphate importer (TC 3.A.1.1.3) family. The complex is composed of two ATP-binding proteins (UgpC), two transmembrane proteins (UgpA and UgpE) and a solute-binding protein (UgpB).

It is found in the cell inner membrane. The enzyme catalyses sn-glycerol 3-phosphate(out) + ATP + H2O = sn-glycerol 3-phosphate(in) + ADP + phosphate + H(+). Functionally, part of the ABC transporter complex UgpBAEC involved in sn-glycerol-3-phosphate (G3P) import. Responsible for energy coupling to the transport system. The chain is sn-glycerol-3-phosphate import ATP-binding protein UgpC from Bordetella bronchiseptica (strain ATCC BAA-588 / NCTC 13252 / RB50) (Alcaligenes bronchisepticus).